The primary structure comprises 250 residues: Kv channel-interacting protein 4 (250 aa).

The tract at residues 2-44 (NVRRVESISAQLEEASSTGGFLYTQNSTKRSIKERLMKLLPCS) is KIS. S17 and S56 each carry phosphoserine. In terms of domain architecture, EF-hand 1; degenerate spans 61–117 (LEMATVRHRPEALELLEAQSKFTKKELQILYRGFKNECPSGVVNEDTFKEIYSQFFP). EF-hand domains follow at residues 120-155 (DSTT…LLRG), 156-191 (TVQE…IYDM), and 204-239 (APRQ…DENI). D133, D135, N137, D144, D169, N171, D173, Y175, E180, D217, N219, D221, and E228 together coordinate Ca(2+). Residues 237–250 (ENIMRSMQLFENVI) are interaction with KCND2.

It belongs to the recoverin family. As to quaternary structure, component of heteromultimeric potassium channels. Identified in potassium channel complexes containing KCND1, KCND2, KCND3, KCNIP1, KCNIP2, KCNIP3, KCNIP4, DPP6 and DPP10. Interacts with KCND2. Interacts with KCND3. Interacts with the C-terminus of PSEN2 and probably PSEN1.

Its subcellular location is the cell membrane. The protein localises to the cytoplasm. It localises to the peroxisome. Its function is as follows. Regulatory subunit of Kv4/D (Shal)-type voltage-gated rapidly inactivating A-type potassium channels. Modulates KCND2 channel density, inactivation kinetics and rate of recovery from inactivation in a calcium-dependent and isoform-specific manner. Modulates KCND3/Kv4.3 currents. Isoform 4 does not increase KCND2 expression at the cell membrane. Isoform 4 retains KCND3 in the endoplasmic reticulum and negatively regulates its expression at the cell membrane. This chain is Kv channel-interacting protein 4 (KCNIP4), found in Bos taurus (Bovine).